The chain runs to 521 residues: Glutamate--tRNA ligase (521 aa).

The 'HIGH' region signature appears at 30–40 (PSPTGYLHVGG). Residues 277–281 (KLSKR) carry the 'KMSKS' region motif. K280 lines the ATP pocket.

The protein belongs to the class-I aminoacyl-tRNA synthetase family. Glutamate--tRNA ligase type 1 subfamily. Monomer.

It localises to the cytoplasm. It catalyses the reaction tRNA(Glu) + L-glutamate + ATP = L-glutamyl-tRNA(Glu) + AMP + diphosphate. Catalyzes the attachment of glutamate to tRNA(Glu) in a two-step reaction: glutamate is first activated by ATP to form Glu-AMP and then transferred to the acceptor end of tRNA(Glu). The sequence is that of Glutamate--tRNA ligase from Chlorobium phaeovibrioides (strain DSM 265 / 1930) (Prosthecochloris vibrioformis (strain DSM 265)).